Consider the following 921-residue polypeptide: Probable dipeptidyl-aminopeptidase B (921 aa).

The segment at 1 to 33 is disordered; it reads MAGHTEENAQLLSTEQESVSRHSSDSAASTAST. Over 1 to 109 the chain is Cytoplasmic; the sequence is MAGHTEENAQ…NKSVDKKLRK (109 aa). The segment covering 8-17 has biased composition (polar residues); sequence NAQLLSTEQE. Residues 110–130 form a helical; Signal-anchor for type II membrane protein membrane-spanning segment; sequence LIWIVGGVFIGAWVLALFIFL. The Vacuolar portion of the chain corresponds to 131 to 921; that stretch reads GKQAYKHSSE…VPLQIDAAKV (791 aa). Asn362 carries N-linked (GlcNAc...) asparagine glycosylation. Residue Ser768 is the Charge relay system of the active site. Asn822 is a glycosylation site (N-linked (GlcNAc...) asparagine). Active-site charge relay system residues include Asp845 and His878.

It belongs to the peptidase S9B family.

Its subcellular location is the vacuole membrane. It carries out the reaction Release of an N-terminal dipeptide, Xaa-Yaa-|-Zaa-, from a polypeptide, preferentially when Yaa is Pro, provided Zaa is neither Pro nor hydroxyproline.. Its function is as follows. Type IV dipeptidyl-peptidase which removes N-terminal dipeptides sequentially from polypeptides having unsubstituted N-termini provided that the penultimate residue is proline. The polypeptide is Probable dipeptidyl-aminopeptidase B (dapB) (Sclerotinia sclerotiorum (strain ATCC 18683 / 1980 / Ss-1) (White mold)).